An 814-amino-acid chain; its full sequence is MKKQFNRMRQLANQTVGRAEKTEVLSEDLLQVEKRLELVKQVSHSTHKKLTACLQGQQGAEADKRSKKLPLTTLAQCLVEGSAILGDDTLLGKMLKLCGETEDKLAQELIHFELQVERDVIEPLFLLAEVEIPNIQKQRKHLAKLVLDMDSSRTRWQQTSKSSGLSSSLQPAGAKADALREEMEEAANRVEICRDQLSADMYSFVAKEIDYANYFQTLIEVQAEYHRKSLTLLQAVLPQIKAQQEAWVEKPSFGKPLEEHLMISGREIAFPIEACVTMLLECGMQEEGLFRVAPSASKLKKLKAALDCCVVDVQEYSADPHAIAGALKSYLRELPEPLMTFELYDEWIQASNIQEQDKRLQALWNACEKLPKANHNNIKYLIKFLSKLSEYQDVNKMTPSNMAIVLGPNLLWPQSEGNITEMMTTVSLQIVGIIEPIIQHADWFFPGEIEFNLTGSYGSPVHVNHNANYSSMPSPDMDPADRRQPEQARRPLSVATDNMMLEFYKKDGLRKIQSMGVRVMDTSWVARRGSSAGRKASCAPPSMQPPAPPSELAAPLPSPLPEQVPDSPATPAPALSPSGASLQPTPERPSVSKSKELSPGSGQKGSPGSIQGTPCPGTQLGPQPAASPSQLPADQSPHTLRKVSKKVAPIPPKVPFVQPGTVSDQPVGQPSPVSLSPTPPSTPSPYGLSYPPGYSMASGQLSPASAPPLASPSVFTSTLAKSRPTPKPRQRPTLPPPQPPSVSLSASSPQSTEHPMLDGMSPGESMSTDLVHFDVPSIHIELGSTLRLSPLEHARRHSATDKRDSEEESESTAL.

Positions glutamine 14–glutamate 249 constitute a BAR domain. The Rho-GAP domain occupies lysine 255 to phenylalanine 445. Disordered stretches follow at residues alanine 467–serine 493, arginine 528–aspartate 769, and serine 784–leucine 814. Basic and acidic residues predominate over residues proline 479–arginine 489. Residue serine 493 is modified to Phosphoserine. Low complexity-rich tracts occupy residues serine 567–serine 581, serine 598–glycine 612, proline 622–proline 637, serine 684–alanine 704, and serine 741–threonine 752. The interval lysine 727–leucine 814 is interaction with BST2. The segment covering proline 790–serine 805 has biased composition (basic and acidic residues). The residue at position 805 (serine 805) is a Phosphoserine. A PDZ-binding motif is present at residues serine 811–leucine 814.

As to quaternary structure, interacts with BST2 (via cytoplasmic domain). Interacts (probably via PDZ-binding motif) with SHANK3 (via PDZ domain); the interaction takes place in dendritic spines and promotes GRIA1 exocytosis. As to expression, specifically expressed in brain (at protein level). Detected in olfactory bulb, cortex, hippocampus, diencephalon and cerebellum (at protein level). Expressed in hippocampal neurons (at protein level).

The protein localises to the cell projection. It is found in the dendritic spine. It localises to the recycling endosome. Its subcellular location is the presynapse. The protein resides in the dendrite. GTPase-activating protein (GAP) that stimulates the GTPase activity of Rho-type GTPases. Thereby, controls Rho-type GTPases cycling between their active GTP-bound and inactive GDP-bound states. Acts as a GAP at least for CDC42 and RAC1. In neurons, is involved in dendritic spine formation and synaptic plasticity in a specific RAC1-GAP activity. Limits the initiation of exploratory dendritic filopodia. Recruited to actin-patches that seed filopodia, binds specifically to plasma membrane sections that are deformed inward by acto-myosin mediated contractile forces. Acts through GAP activity on RAC1 to reduce actin polymerization necessary for filopodia formation. In association with SHANK3, promotes GRIA1 exocytosis from recycling endosomes and spine morphological changes associated to long-term potentiation. This chain is Rho GTPase-activating protein 44, found in Mus musculus (Mouse).